A 369-amino-acid chain; its full sequence is Phosphate-binding protein PstS 3 (369 aa).

The N-terminal stretch at 1 to 21 (MKLNQFGAAIGLLATGALLSG) is a signal peptide. A lipid anchor (N-palmitoyl cysteine) is attached at cysteine 22. Cysteine 22 is lipidated: S-diacylglycerol cysteine. Phosphate contacts are provided by residues 55-57 (STA), serine 85, aspartate 103, and 190-192 (SGT).

The protein belongs to the PstS family. The complex is composed of two ATP-binding proteins (PstB), two transmembrane proteins (PstC and PstA) and a solute-binding protein (PstS).

Its subcellular location is the cell membrane. Part of the ABC transporter complex PstSACB involved in phosphate import. This Mycobacterium leprae (strain TN) protein is Phosphate-binding protein PstS 3 (pstS2).